Here is a 303-residue protein sequence, read N- to C-terminus: Succinate--CoA ligase [ADP-forming] subunit alpha (303 aa).

CoA is bound by residues 20–23 (TGSE), lysine 46, and 108–110 (ITE). Position 173 (tyrosine 173) interacts with substrate. The active-site Tele-phosphohistidine intermediate is histidine 259.

Belongs to the succinate/malate CoA ligase alpha subunit family. As to quaternary structure, heterotetramer of two alpha and two beta subunits.

The enzyme catalyses succinate + ATP + CoA = succinyl-CoA + ADP + phosphate. It catalyses the reaction GTP + succinate + CoA = succinyl-CoA + GDP + phosphate. It functions in the pathway carbohydrate metabolism; tricarboxylic acid cycle; succinate from succinyl-CoA (ligase route): step 1/1. Succinyl-CoA synthetase functions in the citric acid cycle (TCA), coupling the hydrolysis of succinyl-CoA to the synthesis of either ATP or GTP and thus represents the only step of substrate-level phosphorylation in the TCA. The alpha subunit of the enzyme binds the substrates coenzyme A and phosphate, while succinate binding and nucleotide specificity is provided by the beta subunit. The chain is Succinate--CoA ligase [ADP-forming] subunit alpha from Mycobacterium tuberculosis (strain CDC 1551 / Oshkosh).